We begin with the raw amino-acid sequence, 269 residues long: Shikimate dehydrogenase (NADP(+)) (269 aa).

Shikimate is bound by residues 17 to 19 (SKS) and Thr64. The Proton acceptor role is filled by Lys68. NADP(+) is bound at residue Glu80. 2 residues coordinate shikimate: Asn89 and Asp105. NADP(+) contacts are provided by residues 130 to 134 (GAGGA), 154 to 159 (NRTRAK), and Met213. Tyr215 contacts shikimate. Residue Gly237 participates in NADP(+) binding.

This sequence belongs to the shikimate dehydrogenase family. In terms of assembly, homodimer.

It carries out the reaction shikimate + NADP(+) = 3-dehydroshikimate + NADPH + H(+). It functions in the pathway metabolic intermediate biosynthesis; chorismate biosynthesis; chorismate from D-erythrose 4-phosphate and phosphoenolpyruvate: step 4/7. In terms of biological role, involved in the biosynthesis of the chorismate, which leads to the biosynthesis of aromatic amino acids. Catalyzes the reversible NADPH linked reduction of 3-dehydroshikimate (DHSA) to yield shikimate (SA). This is Shikimate dehydrogenase (NADP(+)) from Neisseria meningitidis serogroup C / serotype 2a (strain ATCC 700532 / DSM 15464 / FAM18).